A 119-amino-acid polypeptide reads, in one-letter code: Large ribosomal subunit protein uL22 (119 aa).

Belongs to the universal ribosomal protein uL22 family. As to quaternary structure, part of the 50S ribosomal subunit.

In terms of biological role, this protein binds specifically to 23S rRNA; its binding is stimulated by other ribosomal proteins, e.g. L4, L17, and L20. It is important during the early stages of 50S assembly. It makes multiple contacts with different domains of the 23S rRNA in the assembled 50S subunit and ribosome. The globular domain of the protein is located near the polypeptide exit tunnel on the outside of the subunit, while an extended beta-hairpin is found that lines the wall of the exit tunnel in the center of the 70S ribosome. In Rhodopirellula baltica (strain DSM 10527 / NCIMB 13988 / SH1), this protein is Large ribosomal subunit protein uL22.